A 277-amino-acid polypeptide reads, in one-letter code: Large ribosomal subunit protein uL2 (277 aa).

Residues 225-277 (MNPVDHPHGGGEGKTSGGRNSVTPWGVPTKGKKTRKRGKHSDKYIKVSSVRKR) form a disordered region. Positions 254–264 (KGKKTRKRGKH) are enriched in basic residues.

This sequence belongs to the universal ribosomal protein uL2 family. In terms of assembly, part of the 50S ribosomal subunit. Forms a bridge to the 30S subunit in the 70S ribosome.

Functionally, one of the primary rRNA binding proteins. Required for association of the 30S and 50S subunits to form the 70S ribosome, for tRNA binding and peptide bond formation. It has been suggested to have peptidyltransferase activity; this is somewhat controversial. Makes several contacts with the 16S rRNA in the 70S ribosome. This is Large ribosomal subunit protein uL2 from Anaplasma marginale (strain Florida).